The following is a 118-amino-acid chain: GRB2-related adapter protein-like (118 aa).

The SH3 domain maps to 1-58 (MESVALYSFQATESDELAFNKGDTLKILNMEDDQNWYKAELRGVEGFIPKNYIRVKPH). An SH2 domain is found at 60-118 (WYSGRISRQLAEEILMKRNHLGAFLIRESESSPGEFSVSVNNRAQRGPCLGPKSHSRLG). A disordered region spans residues 89 to 118 (ESSPGEFSVSVNNRAQRGPCLGPKSHSRLG). A compositionally biased stretch (polar residues) spans 90-103 (SSPGEFSVSVNNRA).

This sequence belongs to the GRB2/sem-5/DRK family.

The protein is GRB2-related adapter protein-like (GRAPL) of Homo sapiens (Human).